The sequence spans 156 residues: Small ribosomal subunit protein uS7 (156 aa).

It belongs to the universal ribosomal protein uS7 family. Part of the 30S ribosomal subunit. Contacts proteins S9 and S11.

Functionally, one of the primary rRNA binding proteins, it binds directly to 16S rRNA where it nucleates assembly of the head domain of the 30S subunit. Is located at the subunit interface close to the decoding center, probably blocks exit of the E-site tRNA. The polypeptide is Small ribosomal subunit protein uS7 (Streptococcus pneumoniae serotype 4 (strain ATCC BAA-334 / TIGR4)).